Reading from the N-terminus, the 166-residue chain is Phospholipase A2 inhibitor clone 05 (166 aa).

The N-terminal stretch at M1–G19 is a signal peptide. Residues L46–E161 enclose the C-type lectin domain. 2 disulfides stabilise this stretch: C83–C160 and C138–C152. N-linked (GlcNAc...) asparagine glycosylation occurs at N122.

Belongs to the alpha-type phospholipase A2 inhibitor family. Homotrimer; non-covalently linked. As to expression, expressed by the liver.

It localises to the secreted. Functionally, this phospholipase A2 inhibitor binds directly phospholipase A2 in the presence or absence of calcium. This Bothrops moojeni (Lance-headed viper) protein is Phospholipase A2 inhibitor clone 05.